Here is a 358-residue protein sequence, read N- to C-terminus: Fructose-bisphosphate aldolase 6, cytosolic (358 aa).

The residue at position 2 (S2) is an N-acetylserine. R39 lines the substrate pocket. C68 is subject to S-glutathionyl cysteine; transient. An S-glutathionyl cysteine; transient; alternate modification is found at C173. An S-nitrosocysteine; transient; alternate modification is found at C173. The active-site Proton acceptor is E183. K225 (schiff-base intermediate with dihydroxyacetone-P) is an active-site residue. Residues 266-268 (SGG) and R298 each bind substrate. S350 is subject to Phosphoserine. Position 354 is an N6,N6,N6-trimethyllysine (K354).

The protein belongs to the class I fructose-bisphosphate aldolase family. As to quaternary structure, homotetramer. Interacts with TRX1 and TRX3. Interacts with GAPC1 and VDAC3. Post-translationally, S-glutathionylated at Cys-68 and Cys-173. In terms of processing, S-nitrosylated at Cys-173. In terms of tissue distribution, expressed in roots, rosettes leaves, cauline leaves, stems and flowers.

It localises to the cytoplasm. It is found in the cytosol. The protein resides in the nucleus. Its subcellular location is the mitochondrion. The enzyme catalyses beta-D-fructose 1,6-bisphosphate = D-glyceraldehyde 3-phosphate + dihydroxyacetone phosphate. The protein operates within carbohydrate degradation; glycolysis; D-glyceraldehyde 3-phosphate and glycerone phosphate from D-glucose: step 4/4. With respect to regulation, total and irreversible inhibition by S-nitrosoglutathione (GSNO). Partial and reversible inhibition by oxidized glutathione (GSSG). Functionally, fructose-bisphosphate aldolase that plays a key role in glycolysis and gluconeogenesis. Associates with GAPC1 to the outer mitochondrial membrane, in a redox-dependent manner, leading to binding and bundling of actin. Actin binding and bundling occurs under oxidizing conditions and is reversible under reducing conditions. May be part of a redox-dependent retrograde signal transduction network for adaptation upon oxidative stress. This Arabidopsis thaliana (Mouse-ear cress) protein is Fructose-bisphosphate aldolase 6, cytosolic.